The following is a 263-amino-acid chain: Aquaporin Lacbi1:247946 (263 aa).

Residues 1–18 lie on the Cytoplasmic side of the membrane; it reads MKLTISHHKCAIRKVMAE. Residues 19–39 form a helical membrane-spanning segment; that stretch reads FVGVALLVIFGAGTACQVVLS. Residues 40–45 lie on the Extracellular side of the membrane; that stretch reads TNPSSF. Residues 46–66 traverse the membrane as a helical segment; it reads LSINFGWAIGIATGAWVSAGI. Residues 67 to 89 are Cytoplasmic-facing; sequence SGGHINPAITIAMATYRGFPWRE. The NPA 1 motif lies at 72 to 74; it reads NPA. A helical membrane pass occupies residues 90-110; it reads VPGYIFAQALGGFVGAALVYA. Residues 111 to 143 lie on the Extracellular side of the membrane; the sequence is NYFHAIDIFEGGHIRTQATASLFATFALPYMTQ. The helical transmembrane segment at 144–164 threads the bilayer; that stretch reads ASCFFSEFLATAVLFIVFLAL. The Cytoplasmic segment spans residues 165-169; it reads NDKHN. Residues 170–190 form a helical membrane-spanning segment; that stretch reads GALTNGLLPFALFILFIGLGA. Topologically, residues 191-227 are extracellular; sequence SLGMQTGYAVNPARDFGPRLFLAMAGYGKAVFNYRRQ. Positions 201-203 match the NPA 2 motif; sequence NPA. Residues 228–248 traverse the membrane as a helical segment; that stretch reads YWIWAPIIAPILGAQAGGLLY. The Cytoplasmic segment spans residues 249–263; that stretch reads DTSIYNGDDSPIKWR.

This sequence belongs to the MIP/aquaporin (TC 1.A.8) family.

The protein resides in the membrane. It catalyses the reaction H2O(in) = H2O(out). Functionally, water channel required to facilitate the transport of water across membranes. Shows low but significant water conductivity, but no glycerol nor ammonium transport activities. This chain is Aquaporin Lacbi1:247946, found in Laccaria bicolor (strain S238N-H82 / ATCC MYA-4686) (Bicoloured deceiver).